The sequence spans 291 residues: G1/S-specific cyclin-D2 (291 aa).

The segment at 264–291 (QQQQSNPSKTIEELDQASTPTDVRDINL) is disordered. Residue Thr282 is modified to Phosphothreonine.

It belongs to the cyclin family. Cyclin D subfamily. In terms of assembly, interacts with the CDK4 and CDK6 protein kinases to form a serine/threonine kinase holoenzyme complex. The cyclin subunit imparts substrate specificity to the complex. Phosphorylation at Thr-282 by MAP kinases is required for ubiquitination and degradation by the DCX(AMBRA1) complex. Post-translationally, ubiquitinated by the DCX(AMBRA1) complex during the transition from G1 to S cell phase, leading to its degradation: ubiquitination is dependent on Thr-282 phosphorylation. The DCX(AMBRA1) complex represents the major regulator of CCND2 stability during the G1/S transition.

Its subcellular location is the nucleus. The protein resides in the cytoplasm. It is found in the nucleus membrane. Functionally, regulatory component of the cyclin D2-CDK4 (DC) complex that phosphorylates and inhibits members of the retinoblastoma (RB) protein family including RB1 and regulates the cell-cycle during G(1)/S transition. Phosphorylation of RB1 allows dissociation of the transcription factor E2F from the RB/E2F complex and the subsequent transcription of E2F target genes which are responsible for the progression through the G(1) phase. Hypophosphorylates RB1 in early G(1) phase. Cyclin D-CDK4 complexes are major integrators of various mitogenenic and antimitogenic signals. The polypeptide is G1/S-specific cyclin-D2 (CCND2) (Gallus gallus (Chicken)).